Reading from the N-terminus, the 278-residue chain is Large ribosomal subunit protein uL2 (278 aa).

A disordered region spans residues 223-278 (RGSAMNPNDHPHGGGEGKAPVGRKAPMTPWGKKALGVKTRNKKKASTKLIVRRRTK). The segment covering 261–278 (TRNKKKASTKLIVRRRTK) has biased composition (basic residues).

Belongs to the universal ribosomal protein uL2 family. As to quaternary structure, part of the 50S ribosomal subunit. Forms a bridge to the 30S subunit in the 70S ribosome.

Functionally, one of the primary rRNA binding proteins. Required for association of the 30S and 50S subunits to form the 70S ribosome, for tRNA binding and peptide bond formation. It has been suggested to have peptidyltransferase activity; this is somewhat controversial. Makes several contacts with the 16S rRNA in the 70S ribosome. The polypeptide is Large ribosomal subunit protein uL2 (Spiroplasma kunkelii).